We begin with the raw amino-acid sequence, 90 residues long: c-Myc-binding protein homolog (90 aa).

This sequence belongs to the AMY1 family.

It is found in the nucleus. The chain is c-Myc-binding protein homolog (mycbp) from Dictyostelium discoideum (Social amoeba).